We begin with the raw amino-acid sequence, 217 residues long: 3,4-dihydroxy-2-butanone 4-phosphate synthase (217 aa).

D-ribulose 5-phosphate contacts are provided by residues 37 to 38, Asp-42, 150 to 154, and Glu-174; these read RE and RGGHT. Glu-38 is a binding site for Mg(2+). His-153 lines the Mg(2+) pocket.

Belongs to the DHBP synthase family. In terms of assembly, homodimer. Requires Mg(2+) as cofactor. The cofactor is Mn(2+).

The catalysed reaction is D-ribulose 5-phosphate = (2S)-2-hydroxy-3-oxobutyl phosphate + formate + H(+). The protein operates within cofactor biosynthesis; riboflavin biosynthesis; 2-hydroxy-3-oxobutyl phosphate from D-ribulose 5-phosphate: step 1/1. In terms of biological role, catalyzes the conversion of D-ribulose 5-phosphate to formate and 3,4-dihydroxy-2-butanone 4-phosphate. In Shigella boydii serotype 18 (strain CDC 3083-94 / BS512), this protein is 3,4-dihydroxy-2-butanone 4-phosphate synthase.